The chain runs to 179 residues: Large ribosomal subunit protein uL6 (179 aa).

Belongs to the universal ribosomal protein uL6 family. As to quaternary structure, part of the 50S ribosomal subunit.

Functionally, this protein binds to the 23S rRNA, and is important in its secondary structure. It is located near the subunit interface in the base of the L7/L12 stalk, and near the tRNA binding site of the peptidyltransferase center. The protein is Large ribosomal subunit protein uL6 of Geotalea uraniireducens (strain Rf4) (Geobacter uraniireducens).